Consider the following 224-residue polypeptide: Octanoyl-[acyl-carrier-protein]:protein N-octanoyltransferase LIPT2, mitochondrial (224 aa).

The BPL/LPL catalytic domain maps to 37-217 (SNIPNTLLLC…AFTEQFNCTL (181 aa)). Substrate-binding positions include 81–88 (RGGLITFH), 147–149 (AIG), and 160–162 (GLA). Cysteine 178 functions as the Acyl-thioester intermediate in the catalytic mechanism.

This sequence belongs to the LipB family.

It is found in the mitochondrion. It carries out the reaction octanoyl-[ACP] + L-lysyl-[protein] = N(6)-octanoyl-L-lysyl-[protein] + holo-[ACP] + H(+). The protein operates within protein modification; protein lipoylation via endogenous pathway; protein N(6)-(lipoyl)lysine from octanoyl-[acyl-carrier-protein]: step 1/2. Its function is as follows. Catalyzes the transfer of endogenously produced octanoic acid from octanoyl-acyl-carrier-protein (octanoyl-ACP) onto the lipoyl domains of lipoate-dependent enzymes such as the protein H of the glycine cleavage system (GCSH). Lipoyl-ACP can also act as a substrate although octanoyl-ACP is likely to be the physiological substrate. This chain is Octanoyl-[acyl-carrier-protein]:protein N-octanoyltransferase LIPT2, mitochondrial (lipt2), found in Danio rerio (Zebrafish).